The primary structure comprises 542 residues: Membrane protein insertase YidC (542 aa).

5 helical membrane-spanning segments follow: residues 7–27, 338–358, 417–437, 455–475, and 494–514; these read LLVM…QQDF, FALL…IIGV, MGGC…YWTF, LSAQ…MFLL, and FMPV…VLYW.

The protein belongs to the OXA1/ALB3/YidC family. Type 1 subfamily. Interacts with the Sec translocase complex via SecD. Specifically interacts with transmembrane segments of nascent integral membrane proteins during membrane integration.

The protein localises to the cell inner membrane. Its function is as follows. Required for the insertion and/or proper folding and/or complex formation of integral membrane proteins into the membrane. Involved in integration of membrane proteins that insert both dependently and independently of the Sec translocase complex, as well as at least some lipoproteins. Aids folding of multispanning membrane proteins. The polypeptide is Membrane protein insertase YidC (Actinobacillus pleuropneumoniae serotype 7 (strain AP76)).